Reading from the N-terminus, the 202-residue chain is Recombination protein RecR (202 aa).

The C4-type zinc finger occupies 56–71 (CVVCGTVSDGELCRIC). The region spanning 79–179 (TMICVVEEPK…TVTRLASGLP (101 aa)) is the Toprim domain.

Belongs to the RecR family.

In terms of biological role, may play a role in DNA repair. It seems to be involved in an RecBC-independent recombinational process of DNA repair. It may act with RecF and RecO. The chain is Recombination protein RecR from Nocardia farcinica (strain IFM 10152).